The following is a 667-amino-acid chain: DNA ligase (667 aa).

NAD(+) contacts are provided by residues 32–36, 81–82, and Glu110; these read DSEYD and SL. Lys112 acts as the N6-AMP-lysine intermediate in catalysis. Arg133, Glu167, Lys283, and Lys307 together coordinate NAD(+). Residues Cys401, Cys404, Cys419, and Cys424 each coordinate Zn(2+). Positions 586 to 667 constitute a BRCT domain; the sequence is EGHPEFSGKT…FVDKQNELNS (82 aa).

It belongs to the NAD-dependent DNA ligase family. LigA subfamily. The cofactor is Mg(2+). Requires Mn(2+) as cofactor.

It catalyses the reaction NAD(+) + (deoxyribonucleotide)n-3'-hydroxyl + 5'-phospho-(deoxyribonucleotide)m = (deoxyribonucleotide)n+m + AMP + beta-nicotinamide D-nucleotide.. DNA ligase that catalyzes the formation of phosphodiester linkages between 5'-phosphoryl and 3'-hydroxyl groups in double-stranded DNA using NAD as a coenzyme and as the energy source for the reaction. It is essential for DNA replication and repair of damaged DNA. This Staphylococcus aureus (strain COL) protein is DNA ligase.